Consider the following 733-residue polypeptide: DNA-binding protein SATB2 (733 aa).

The interval 1–47 (MERRSESPCLRDSPDRRSGSPDVKGPPPVKVARLEQNGSPMGARGRP) is disordered. Ser20 is subject to Phosphoserine. Residues Lys24 and Lys30 each participate in a glycyl lysine isopeptide (Lys-Gly) (interchain with G-Cter in SUMO2) cross-link. Ser39 bears the Phosphoserine mark. A CMP domain is found at 57–158 (GLMIPVFCVV…VVTLKIQLQS (102 aa)). Lys161 is covalently cross-linked (Glycyl lysine isopeptide (Lys-Gly) (interchain with G-Cter in SUMO2)). The 74-residue stretch at 161–234 (KLEDLPAEQW…WYKKYKKIKV (74 aa)) folds into the CUTL domain. Lys233 is covalently cross-linked (Glycyl lysine isopeptide (Lys-Gly) (interchain with G-Cter in SUMO)). Residue Lys350 forms a Glycyl lysine isopeptide (Lys-Gly) (interchain with G-Cter in SUMO); alternate linkage. Lys350 participates in a covalent cross-link: Glycyl lysine isopeptide (Lys-Gly) (interchain with G-Cter in SUMO2); alternate. Positions 350–437 (KPEPTNSSVE…ERDRIYQDER (88 aa)) form a DNA-binding region, CUT 1. Positions 435 to 473 (DERERSMNPNVSMVSSASSSPSSSRTPQAKTSTPTTDLP) are disordered. Low complexity predominate over residues 441–458 (MNPNVSMVSSASSSPSSS). The residue at position 454 (Ser454) is a Phosphoserine. Polar residues predominate over residues 459–470 (RTPQAKTSTPTT). Phosphothreonine is present on Thr467. Residues 473–560 (PIKVDGANIN…ERDVIYEEES (88 aa)) constitute a DNA-binding region (CUT 2). Lys475 participates in a covalent cross-link: Glycyl lysine isopeptide (Lys-Gly) (interchain with G-Cter in SUMO2). Residues 580–593 (QVLHRQQSQPAKES) are compositionally biased toward low complexity. Disordered stretches follow at residues 580–617 (QVLH…KPRS) and 694–733 (LLTE…IDQR). Ser594 bears the Phosphoserine mark. Residues 615-674 (PRSRTKISLEALGILQSFIHDVGLYPDQEAIHTLSAQLDLPKHTIIKFFQNQRYHVKHHG) constitute a DNA-binding region (homeobox). The segment covering 694–708 (LLTESEENDSEEGSE) has biased composition (acidic residues). The segment covering 709–733 (EMYKVEAEEENADKSKAAPAEIDQR) has biased composition (basic and acidic residues). A Glycyl lysine isopeptide (Lys-Gly) (interchain with G-Cter in SUMO2) cross-link involves residue Lys724.

Belongs to the CUT homeobox family. As to quaternary structure, interacts with ATF4 and RUNX2; resulting in enhanced DNA binding and transactivation by these transcription factors. Interacts with PIAS1. Sumoylated by PIAS1. Sumoylation promotes nuclear localization, but represses transcription factor activity. In terms of tissue distribution, high expression in adult brain, moderate expression in fetal brain, and weak expression in adult liver, kidney, and spinal cord and in select brain regions, including amygdala, corpus callosum, caudate nucleus, and hippocampus.

The protein localises to the nucleus matrix. Its function is as follows. Binds to DNA, at nuclear matrix- or scaffold-associated regions. Thought to recognize the sugar-phosphate structure of double-stranded DNA. Transcription factor controlling nuclear gene expression, by binding to matrix attachment regions (MARs) of DNA and inducing a local chromatin-loop remodeling. Acts as a docking site for several chromatin remodeling enzymes and also by recruiting corepressors (HDACs) or coactivators (HATs) directly to promoters and enhancers. Required for the initiation of the upper-layer neurons (UL1) specific genetic program and for the inactivation of deep-layer neurons (DL) and UL2 specific genes, probably by modulating BCL11B expression. Repressor of Ctip2 and regulatory determinant of corticocortical connections in the developing cerebral cortex. May play an important role in palate formation. Acts as a molecular node in a transcriptional network regulating skeletal development and osteoblast differentiation. This chain is DNA-binding protein SATB2 (SATB2), found in Homo sapiens (Human).